A 290-amino-acid chain; its full sequence is 4-hydroxy-tetrahydrodipicolinate synthase (290 aa).

Residue threonine 42 participates in pyruvate binding. Tyrosine 129 serves as the catalytic Proton donor/acceptor. Residue lysine 157 is the Schiff-base intermediate with substrate of the active site. Isoleucine 198 is a pyruvate binding site.

This sequence belongs to the DapA family. As to quaternary structure, homotetramer; dimer of dimers.

It is found in the cytoplasm. It catalyses the reaction L-aspartate 4-semialdehyde + pyruvate = (2S,4S)-4-hydroxy-2,3,4,5-tetrahydrodipicolinate + H2O + H(+). The protein operates within amino-acid biosynthesis; L-lysine biosynthesis via DAP pathway; (S)-tetrahydrodipicolinate from L-aspartate: step 3/4. In terms of biological role, catalyzes the condensation of (S)-aspartate-beta-semialdehyde [(S)-ASA] and pyruvate to 4-hydroxy-tetrahydrodipicolinate (HTPA). The protein is 4-hydroxy-tetrahydrodipicolinate synthase of Chlamydia felis (strain Fe/C-56) (Chlamydophila felis).